Reading from the N-terminus, the 338-residue chain is uncharacterized protein (338 aa).

6 helical membrane-spanning segments follow: residues 13 to 33 (PAYS…DFLM), 71 to 91 (GLYS…ALFF), 110 to 130 (TLCF…VYVP), 176 to 196 (YGYR…LLFY), 218 to 238 (LITG…LDVA), and 301 to 321 (FRGF…MFVF). Solcar repeat units lie at residues 13–100 (PAYS…TKRH), 108–202 (PETL…LRQV), and 216–328 (RELI…IIRL).

It belongs to the mitochondrial carrier (TC 2.A.29) family.

The protein resides in the mitochondrion inner membrane. Functionally, mitochondrial solute carriers shuttle metabolites, nucleotides, and cofactors through the mitochondrial inner membrane. This is an uncharacterized protein from Schizosaccharomyces pombe (strain 972 / ATCC 24843) (Fission yeast).